Reading from the N-terminus, the 322-residue chain is tRNA-dihydrouridine synthase B (322 aa).

FMN contacts are provided by residues 16–18 and Q70; that span reads PMA. Catalysis depends on C100, which acts as the Proton donor. Residues K139, 200–202, and 224–225 each bind FMN; these read NGD and GR.

Belongs to the Dus family. DusB subfamily. The cofactor is FMN.

The catalysed reaction is a 5,6-dihydrouridine in tRNA + NAD(+) = a uridine in tRNA + NADH + H(+). It catalyses the reaction a 5,6-dihydrouridine in tRNA + NADP(+) = a uridine in tRNA + NADPH + H(+). Functionally, catalyzes the synthesis of 5,6-dihydrouridine (D), a modified base found in the D-loop of most tRNAs, via the reduction of the C5-C6 double bond in target uridines. The sequence is that of tRNA-dihydrouridine synthase B from Shewanella oneidensis (strain ATCC 700550 / JCM 31522 / CIP 106686 / LMG 19005 / NCIMB 14063 / MR-1).